The chain runs to 159 residues: Ribosomal RNA large subunit methyltransferase H (159 aa).

S-adenosyl-L-methionine is bound by residues leucine 76, glycine 108, and leucine 127–phenylalanine 132.

Belongs to the RNA methyltransferase RlmH family. In terms of assembly, homodimer.

It localises to the cytoplasm. It carries out the reaction pseudouridine(1915) in 23S rRNA + S-adenosyl-L-methionine = N(3)-methylpseudouridine(1915) in 23S rRNA + S-adenosyl-L-homocysteine + H(+). Its function is as follows. Specifically methylates the pseudouridine at position 1915 (m3Psi1915) in 23S rRNA. The protein is Ribosomal RNA large subunit methyltransferase H of Acetivibrio thermocellus (strain ATCC 27405 / DSM 1237 / JCM 9322 / NBRC 103400 / NCIMB 10682 / NRRL B-4536 / VPI 7372) (Clostridium thermocellum).